The following is a 664-amino-acid chain: Acid beta-fructofuranosidase 4, vacuolar (664 aa).

Residues 1 to 43 (MASSDALLPISAREEEPLCPYTRLPMADPNQETHGPRRRRPFK) lie on the Cytoplasmic side of the membrane. Residues 1-108 (MASSDALLPI…WKLSGDRNTP (108 aa)) constitute a propeptide, removed in mature form. Short sequence motifs (critical for endoplasmic reticulum export) lie at residues 7-8 (LL) and 9-10 (PI). A Critical for trafficking from the trans-Golgi network to the prevacuolar compartment and from the prevacuolar compartment to the central vacuole motif is present at residues 14–16 (EEE). The chain crosses the membrane as a helical; Signal-anchor for type II membrane protein span at residues 44 to 64 (GLLAVSFGLLFIAFYVALIAT). The Lumenal segment spans residues 65 to 664 (HDGSRSNDEG…DEAVRALSRT (600 aa)). N-linked (GlcNAc...) asparagine glycosylation is present at Asn113. Residues 132–135 (WMND), Gln151, Trp159, 194–195 (WT), and 258–259 (RD) each bind substrate. The active site involves Asp135. An N-linked (GlcNAc...) (complex) asparagine glycan is attached at Asn280. Residues Glu313 and Asp346 each coordinate substrate. Asn362 and Asn498 each carry an N-linked (GlcNAc...) asparagine glycan. An intrachain disulfide couples Cys510 to Cys558.

Belongs to the glycosyl hydrolase 32 family. In terms of assembly, may be present in two forms, a 70 kDa monomer and a heterodimer of the 30 kDa and 38 kDa subunits. The ratio of the levels of the two forms within cells appears to be regulated developmentally. Mostly expressed in stems, roots and flowers, and, to a lower extent, in mature leaves.

It localises to the vacuole. Its subcellular location is the endoplasmic reticulum membrane. The protein localises to the golgi apparatus membrane. It is found in the golgi apparatus. The protein resides in the trans-Golgi network membrane. It localises to the prevacuolar compartment membrane. Its subcellular location is the vacuole membrane. The protein localises to the vacuole lumen. The catalysed reaction is Hydrolysis of terminal non-reducing beta-D-fructofuranoside residues in beta-D-fructofuranosides.. It functions in the pathway glycan biosynthesis; sucrose metabolism. Inhibited by C/VIF1 and C/VIF2. Its function is as follows. Possible role in the continued mobilization of sucrose to sink organs. Regulates root elongation. The polypeptide is Acid beta-fructofuranosidase 4, vacuolar (Arabidopsis thaliana (Mouse-ear cress)).